The following is a 353-amino-acid chain: Probable G-protein coupled receptor 139 (353 aa).

The Extracellular segment spans residues 1-29 (MEHTHAHLAANSSLSWWSPGSACGLGFVP). Asn11 is a glycosylation site (N-linked (GlcNAc...) asparagine). The helical transmembrane segment at 30 to 50 (VVYYSLLLCLGLPANILTVII) threads the bilayer. Topologically, residues 51–65 (LSQLVARRQKSSYNY) are cytoplasmic. The helical transmembrane segment at 66-86 (LLALAAADILVLFFIVFVDFL) threads the bilayer. Residues 87–102 (LEDFILNMQMPQVPDK) are Extracellular-facing. Residues 103–123 (IIEVLEFSSIHTSIWITVPLT) traverse the membrane as a helical segment. Residues 124–148 (IDRYIAVCHPLKYHTVSYPARTRKV) are Cytoplasmic-facing. A helical membrane pass occupies residues 149 to 169 (IVSVYITCFLTSIPYYWWPNI). Residues 170-181 (WTEDYISTSVHH) are Extracellular-facing. A helical membrane pass occupies residues 182–202 (VLIWIHCFTVYLVPCSIFFIL). Residues 203-228 (NSIIVYKLRRKSNFRLRGYSTGKTTA) lie on the Cytoplasmic side of the membrane. The helical transmembrane segment at 229–249 (ILFTITSIFATLWAPRIIMIL) threads the bilayer. Topologically, residues 250–268 (YHLYGAPIQNRWLVHIMSD) are extracellular. A helical transmembrane segment spans residues 269–289 (IANMLALLNTAINFFLYCFIS). The Cytoplasmic segment spans residues 290–353 (KRFRTMAAAT…KNGKPIKVSP (64 aa)).

This sequence belongs to the G-protein coupled receptor 1 family. In terms of tissue distribution, expressed almost exclusively in the brain. Detected at very low levels in the peripheral tissues.

The protein localises to the cell membrane. Its function is as follows. Orphan receptor. Seems to act through a G(q/11)-mediated pathway. The protein is Probable G-protein coupled receptor 139 (GPR139) of Homo sapiens (Human).